We begin with the raw amino-acid sequence, 163 residues long: Cyclic pyranopterin monophosphate synthase (163 aa).

Residues 79-81 (LCH) and 117-118 (ME) each bind substrate. The active site involves aspartate 132.

This sequence belongs to the MoaC family. Homohexamer; trimer of dimers.

It carries out the reaction (8S)-3',8-cyclo-7,8-dihydroguanosine 5'-triphosphate = cyclic pyranopterin phosphate + diphosphate. Its pathway is cofactor biosynthesis; molybdopterin biosynthesis. In terms of biological role, catalyzes the conversion of (8S)-3',8-cyclo-7,8-dihydroguanosine 5'-triphosphate to cyclic pyranopterin monophosphate (cPMP). This chain is Cyclic pyranopterin monophosphate synthase, found in Chloroflexus aurantiacus (strain ATCC 29366 / DSM 635 / J-10-fl).